The primary structure comprises 126 residues: NADH-quinone oxidoreductase subunit A (126 aa).

Transmembrane regions (helical) follow at residues 16-36 (ILVL…AAAI), 73-93 (ILFI…VAFG), and 95-115 (MSMT…VGFA).

The protein belongs to the complex I subunit 3 family. As to quaternary structure, NDH-1 is composed of 14 different subunits. Subunits NuoA, H, J, K, L, M, N constitute the membrane sector of the complex.

The protein resides in the cell inner membrane. It catalyses the reaction a quinone + NADH + 5 H(+)(in) = a quinol + NAD(+) + 4 H(+)(out). Its function is as follows. NDH-1 shuttles electrons from NADH, via FMN and iron-sulfur (Fe-S) centers, to quinones in the respiratory chain. The immediate electron acceptor for the enzyme in this species is believed to be ubiquinone. Couples the redox reaction to proton translocation (for every two electrons transferred, four hydrogen ions are translocated across the cytoplasmic membrane), and thus conserves the redox energy in a proton gradient. This chain is NADH-quinone oxidoreductase subunit A, found in Rhodobacter capsulatus (Rhodopseudomonas capsulata).